The chain runs to 535 residues: MGMEVAAARLGALYTTSDYASVVSINLFVALLCACIVLGHLLEENRWVNESITALIIGLCTGVVILLMTKGKSSHLFVFSEDLFFIYLLPPIIFNAGFQVKKKQFFRNFMTITLFGAVGTMISFFTISIAAIAIFSRMNIGTLDVGDFLAIGAIFSATDSVCTLQVLNQDETPFLYSLVFGEGVVNDATSIVLFNALQNFDLVHIDAAVVLKFLGNFFYLFLSSTFLGVFAGLLSAYIIKKLYIGRHSTDREVALMMLMAYLSYMLAELLDLSGILTVFFCGIVMSHYTWHNVTESSRVTTKHAFATLSFIAETFLFLYVGMDALDIEKWEFASDRPGKSIGISSILLGLVLIGRAAFVFPLSFLSNLTKKAPNEKITWRQQVVIWWAGLMRGAVSIALAYNKFTRSGHTQLHGNAIMITSTITVVLFSTMVFGMMTKPLIRLLLPASGHPVTSEPSSPKSLHSPLLTSMQGSDLESTTNIVRPSSLRMLLTKPTHTVHYYWRKFDDALMRPMFGGRGFVPFSPGSPTEQSHGGR.

The Cytoplasmic segment spans residues 1–21 (MGMEVAAARLGALYTTSDYAS). Residues 22-42 (VVSINLFVALLCACIVLGHLL) traverse the membrane as a helical segment. The Vacuolar segment spans residues 43–46 (EENR). Residues 47–67 (WVNESITALIIGLCTGVVILL) traverse the membrane as a helical segment. The Cytoplasmic portion of the chain corresponds to 68–75 (MTKGKSSH). Residues 76 to 96 (LFVFSEDLFFIYLLPPIIFNA) form a helical membrane-spanning segment. At 97 to 114 (GFQVKKKQFFRNFMTITL) the chain is on the vacuolar side. Residues 115 to 135 (FGAVGTMISFFTISIAAIAIF) traverse the membrane as a helical segment. Topologically, residues 136–137 (SR) are cytoplasmic. The chain crosses the membrane as a helical span at residues 138 to 158 (MNIGTLDVGDFLAIGAIFSAT). Over 159-173 (DSVCTLQVLNQDETP) the chain is Vacuolar. A helical membrane pass occupies residues 174–194 (FLYSLVFGEGVVNDATSIVLF). The Cytoplasmic portion of the chain corresponds to 195–218 (NALQNFDLVHIDAAVVLKFLGNFF). Residues 219–239 (YLFLSSTFLGVFAGLLSAYII) traverse the membrane as a helical segment. At 240–264 (KKLYIGRHSTDREVALMMLMAYLSY) the chain is on the vacuolar side. A helical transmembrane segment spans residues 265-285 (MLAELLDLSGILTVFFCGIVM). The Cytoplasmic segment spans residues 286–304 (SHYTWHNVTESSRVTTKHA). A helical membrane pass occupies residues 305–325 (FATLSFIAETFLFLYVGMDAL). At 326–344 (DIEKWEFASDRPGKSIGIS) the chain is on the vacuolar side. Residues 345–365 (SILLGLVLIGRAAFVFPLSFL) form a helical membrane-spanning segment. Residues 366 to 381 (SNLTKKAPNEKITWRQ) are Cytoplasmic-facing. Residues 382–402 (QVVIWWAGLMRGAVSIALAYN) form a helical membrane-spanning segment. Over 403 to 415 (KFTRSGHTQLHGN) the chain is Vacuolar. Residues 416–436 (AIMITSTITVVLFSTMVFGMM) form a helical membrane-spanning segment. The Cytoplasmic segment spans residues 437-535 (TKPLIRLLLP…SPTEQSHGGR (99 aa)). The segment at 452–478 (VTSEPSSPKSLHSPLLTSMQGSDLEST) is disordered. Residues 454–469 (SEPSSPKSLHSPLLTS) show a composition bias toward low complexity.

Belongs to the monovalent cation:proton antiporter 1 (CPA1) transporter (TC 2.A.36) family.

It localises to the vacuole membrane. The enzyme catalyses Na(+)(in) + H(+)(out) = Na(+)(out) + H(+)(in). It catalyses the reaction K(+)(in) + H(+)(out) = K(+)(out) + H(+)(in). In terms of biological role, vacuolar antiporter that acts in low affinity electroneutral exchange of protons H(+) for cations such as Na(+) or K(+) across membranes. Plays important roles in the transport of Na(+) and K(+) accumulated in the cytoplasm into vacuoles, and is involved in salt stress tolerance. The sequence is that of Sodium/hydrogen exchanger 1 from Oryza sativa subsp. japonica (Rice).